Consider the following 296-residue polypeptide: tRNA dimethylallyltransferase (296 aa).

9 to 16 (GTTASGKS) is an ATP binding site. Residue 11–16 (TASGKS) participates in substrate binding. Positions 34–37 (DSLA) are interaction with substrate tRNA.

Belongs to the IPP transferase family. As to quaternary structure, monomer. Mg(2+) serves as cofactor.

The enzyme catalyses adenosine(37) in tRNA + dimethylallyl diphosphate = N(6)-dimethylallyladenosine(37) in tRNA + diphosphate. Its function is as follows. Catalyzes the transfer of a dimethylallyl group onto the adenine at position 37 in tRNAs that read codons beginning with uridine, leading to the formation of N6-(dimethylallyl)adenosine (i(6)A). This is tRNA dimethylallyltransferase from Campylobacter curvus (strain 525.92).